The following is a 216-amino-acid chain: ATP phosphoribosyltransferase (216 aa).

It belongs to the ATP phosphoribosyltransferase family. Short subfamily. Heteromultimer composed of HisG and HisZ subunits.

Its subcellular location is the cytoplasm. It carries out the reaction 1-(5-phospho-beta-D-ribosyl)-ATP + diphosphate = 5-phospho-alpha-D-ribose 1-diphosphate + ATP. It participates in amino-acid biosynthesis; L-histidine biosynthesis; L-histidine from 5-phospho-alpha-D-ribose 1-diphosphate: step 1/9. Its function is as follows. Catalyzes the condensation of ATP and 5-phosphoribose 1-diphosphate to form N'-(5'-phosphoribosyl)-ATP (PR-ATP). Has a crucial role in the pathway because the rate of histidine biosynthesis seems to be controlled primarily by regulation of HisG enzymatic activity. The sequence is that of ATP phosphoribosyltransferase from Lachnospira eligens (strain ATCC 27750 / DSM 3376 / VPI C15-48 / C15-B4) (Eubacterium eligens).